The chain runs to 173 residues: NADH-ubiquinone oxidoreductase chain 6 (173 aa).

Transmembrane regions (helical) follow at residues 1–21 (MTYLVSLLLMALIVGLIAVAS), 24–44 (APYFAALGLVVAAGVGCGVLV), 53–73 (LVLFLIYLGGMLVVFAYSAAL), 86–106 (SVVGYVMIYLLGVGLMVGVFW), and 139–159 (YGGGMLVICAWVLLLTLFVVL).

Belongs to the complex I subunit 6 family.

Its subcellular location is the mitochondrion membrane. The catalysed reaction is a ubiquinone + NADH + 5 H(+)(in) = a ubiquinol + NAD(+) + 4 H(+)(out). Functionally, core subunit of the mitochondrial membrane respiratory chain NADH dehydrogenase (Complex I) that is believed to belong to the minimal assembly required for catalysis. Complex I functions in the transfer of electrons from NADH to the respiratory chain. The immediate electron acceptor for the enzyme is believed to be ubiquinone. In Formosania lacustris (Oriental stream loach), this protein is NADH-ubiquinone oxidoreductase chain 6 (MT-ND6).